A 764-amino-acid chain; its full sequence is MEYRYSTVVDPSTYETHGLCDGIPLRCHESPELEEIETLRCQEDWRRWVGPLGFYKGGLGPRWNFMAITVPECLPERLGVLGYANELAFLHDDVTDVADYGDLHNDDLKAAFEQAASTGHIEGSASGKRAIQAHIANEMMSIHKQHAITTLEAWAKFAELGSGRQHTTHFKTEDEYIKYRMIDIGTMFWYGMVTFGMGISIPEHELEMCHRLADTAYLNLGLTNDLYSWQKEYETAVAMDRDYVANIIGVIMEERNISEAEAKEVCREKIKKTIVDFRKIVDDTKARDDVSLDTKRYLEGLLYSLSGNLVWSIDCPRYHPWSSYNERQLDWMKNGIPKSPPKVNGNATANGNGVHHAPKESLANGTLNGHDRIHAPAVNGNGASHTSSIKGSTGGNGVTHSPVSNGSAVVNSALSMEIDTDLVNVFARKEYKSINGFKMHEGDNHPSNGQTKLNGNVTSWKVPGDVQTKVIQAPYDYISSLPSKGVRDHAIDALNVWCRVPAAKLDLIKLITNMLHNTSLMLDDLEDGSHLRRGRSSTHTIFGAGQTVNAANYHVIRALEEVQKFGDAESIVIFIEELKSLYVGQSLDLYWTNNAICPSVDEYFQMVENKTGGLFRLFGRLMSLHSSHPVKADLTGFLNQFGRYFQTRDDYQNLTSPEYTKQKGFCEDLDEGKFSLPLIHLMHSAPSNLVVRNIWTQRLVNNKASPAHKQTILELMKENGSLQFTMDALDVLHAKVEKSISDLEARFGVENFQLRLILEMLRKA.

Positions 1 to 324 are terpene cyclase; the sequence is MEYRYSTVVD…CPRYHPWSSY (324 aa). Aspartate 92 and aspartate 96 together coordinate Mg(2+). The short motif at 92–96 is the DDXXD 1 element; that stretch reads DDVTD. An NSE/DTE motif is present at residues 224–232; the sequence is NDLYSWQKE. Residues 325-761 form a prenyltransferase region; sequence NERQLDWMKN…FQLRLILEML (437 aa). Residues 377-403 form a disordered region; that stretch reads AVNGNGASHTSSIKGSTGGNGVTHSPV. A compositionally biased stretch (polar residues) spans 381 to 391; sequence NGASHTSSIKG. The isopentenyl diphosphate site is built by lysine 484, arginine 487, and histidine 516. 2 residues coordinate Mg(2+): aspartate 523 and aspartate 527. The short motif at 523 to 527 is the DDXXD 2 element; the sequence is DDLED. Arginine 532 is a binding site for dimethylallyl diphosphate. Isopentenyl diphosphate is bound at residue arginine 533. Lysine 610, threonine 611, glutamine 646, asparagine 653, lysine 663, and lysine 673 together coordinate dimethylallyl diphosphate.

It in the N-terminal section; belongs to the terpene synthase family. The protein in the C-terminal section; belongs to the FPP/GGPP synthase family.

The enzyme catalyses isopentenyl diphosphate + (2E,6E)-farnesyl diphosphate = (2E,6E,10E)-geranylgeranyl diphosphate + diphosphate. It catalyses the reaction (2E,6E,10E)-geranylgeranyl diphosphate = talarodiene + diphosphate. It functions in the pathway secondary metabolite biosynthesis; terpenoid biosynthesis. Bifunctional type I diterpene synthase; part of the gene cluster that mediates the biosynthesis of talaronoid C, a fusicoccane diterpenoid with an unprecedented tricyclic 5/8/6 ring system. The first step in the pathway is performed by the fusicoccadiene synthase tndC that possesses both prenyl transferase and terpene cyclase activity, converting isopentenyl diphosphate and dimethylallyl diphosphate into geranylgeranyl diphosphate (GGDP) and further converting GGDP into talarodiene, a precursor for talaronoid C. The remaining enzymes from the cluster include the cytochrome P450 monooxygenase tndB, the aldehyde reductase tndE and the alcohol dehydrogenase tndF that are involved in the conversion of talarodiene into talaronoid C. This chain is Bifunctional type I diterpene synthase tndC, found in Aspergillus flavipes.